The chain runs to 570 residues: Glycine--tRNA ligase (570 aa).

Residues Arg99 and Glu165 each contribute to the substrate site. Residues 197–199 (RNE), 207–212 (IRLREF), 324–325 (EC), and 443–446 (GIDR) contribute to the ATP site. 212-216 (FTQAE) serves as a coordination point for substrate. Position 439 to 443 (439 to 443 (EPSFG)) interacts with substrate.

Belongs to the class-II aminoacyl-tRNA synthetase family.

The protein resides in the cytoplasm. It carries out the reaction tRNA(Gly) + glycine + ATP = glycyl-tRNA(Gly) + AMP + diphosphate. In terms of biological role, catalyzes the attachment of glycine to tRNA(Gly). The protein is Glycine--tRNA ligase of Pyrococcus horikoshii (strain ATCC 700860 / DSM 12428 / JCM 9974 / NBRC 100139 / OT-3).